A 250-amino-acid chain; its full sequence is Aquaporin TIP2-1 (250 aa).

Met-1 carries the N-acetylmethionine modification. Over 1–20 (MAGVAFGSFDDSFSLASLRA) the chain is Cytoplasmic. Residue Ala-2 is modified to N-acetylalanine; in Aquaporin TIP2-1, N-terminally processed. Residues 21-41 (YLAEFISTLLFVFAGVGSAIA) traverse the membrane as a helical segment. Topologically, residues 42–54 (YAKLTSDAALDTP) are vacuolar. The chain crosses the membrane as a helical span at residues 55 to 75 (GLVAIAVCHGFALFVAVAIGA). Residues 76–98 (NISGGHVNPAVTFGLAVGGQITV) lie on the Cytoplasmic side of the membrane. Residues 83 to 85 (NPA) carry the NPA 1 motif. A helical membrane pass occupies residues 99–119 (ITGVFYWIAQLLGSTAACFLL). Residues 120–141 (KYVTGGLAVPTHSVAAGLGSIE) are Vacuolar-facing. Residues 142 to 162 (GVVMEIIITFALVYTVYATAA) traverse the membrane as a helical segment. Residues 163-168 (DPKKGS) are Cytoplasmic-facing. Residues 169–189 (LGTIAPLAIGLIVGANILAAG) traverse the membrane as a helical segment. Residues 190-215 (PFSGGSMNPARSFGPAVAAGDFSGHW) lie on the Vacuolar side of the membrane. Residues 197-199 (NPA) carry the NPA 2 motif. A helical transmembrane segment spans residues 216–236 (VYWVGPLIGGGLAGLIYGNVF). Residues 237-250 (MGSSEHVPLASADF) lie on the Cytoplasmic side of the membrane.

Belongs to the MIP/aquaporin (TC 1.A.8) family. TIP (TC 1.A.8.10) subfamily. In terms of assembly, interacts with cucumber mosaic virus (CMV) Protein 1a. As to expression, strongly expressed in shoot, rosette, bolt and flowers. Also expressed in roots, flower buds and above ground.

The protein localises to the vacuole membrane. Functionally, aquaporin required to facilitate the transport of water from the vacuolar compartment to the cytoplasm. Does not promote glycerol permeability. Its function is impaired by Hg(2+). Transports urea in yeast cells and Xenopus laevis oocytes in a pH-independent manner. Transports methylammonium or ammonium in yeast cells and Xenopus laevis oocytes, preferentially at high medium pH. May participate in vacuolar compartmentation and detoxification of ammonium. The polypeptide is Aquaporin TIP2-1 (TIP2-1) (Arabidopsis thaliana (Mouse-ear cress)).